Consider the following 491-residue polypeptide: Cytochrome P450 monooxygenase 521A1 (491 aa).

A helical membrane pass occupies residues Met-1–Lys-21. Residue Cys-438 coordinates heme.

It belongs to the cytochrome P450 family. Requires heme as cofactor.

The protein resides in the membrane. It catalyses the reaction discoidol + reduced [NADPH--hemoprotein reductase] + O2 = discodiene + acetone + oxidized [NADPH--hemoprotein reductase] + 2 H2O + H(+). The protein operates within sesquiterpene biosynthesis. Its function is as follows. Cytochrome P450 monooxygenase; part of the gene cluster that mediates the biosynthesis of the trisnorsesquiterpene discodiene which has a function during later stages of multicellular development, during the transition from fingers to Mexican hats. The terpene synthase tps8 converts its substrate farnesyl diphosphate (FDP) into the bicyclic sesquiterpene alcohol discoidol. The cytochrome P450 monooxygenase cyp521A1 then catalyzes the oxidative degradation of discoidol to form the trisnorsesquiterpene discodiene. This is Cytochrome P450 monooxygenase 521A1 (cyp521A1) from Dictyostelium discoideum (Social amoeba).